The primary structure comprises 404 residues: MKLPIYLDYSATTPVDPRVAQKMSECLLMDGNFGNPASRSHVFGWKAEEAVENARRQVAELVNADPREIVWTSGATESDNLAIKGVAHFYSGKGKHIITSKIEHKAVLDTCRQLEREGFEVTYLEPGEDGLITPALVEAALRDDTILVSVMHVNNEIGTVNDIAAIGELTRSRGVLFHVDAAQSTGKVEIDLDKLKVDLMSFSAHKTYGPKGIGALYVRRKPRVRIEGQMHGGGHERGMRSGTLATHQIVGMGEAFRIAKEEMAQENARVLALRDRFFAQIDGLEELYINGSMTSRVPHNLNVSFNYVEGESLIMALKDLAVSSGSACTSASLEPSYVLRALGRNDELAHSSIRFTFGRFTTEEEIDYAAKKVVEAVSKLRELSPLWDMYKEGVDLSQVEWQAH.

Pyridoxal 5'-phosphate is bound by residues 75–76 (AT), Asn155, Gln183, and 203–205 (SAH). Lys206 carries the post-translational modification N6-(pyridoxal phosphate)lysine. Thr243 serves as a coordination point for pyridoxal 5'-phosphate. Cys328 serves as the catalytic Cysteine persulfide intermediate. Cys328 is a [2Fe-2S] cluster binding site.

The protein belongs to the class-V pyridoxal-phosphate-dependent aminotransferase family. NifS/IscS subfamily. Homodimer. Forms a heterotetramer with IscU, interacts with other sulfur acceptors. Pyridoxal 5'-phosphate is required as a cofactor.

It is found in the cytoplasm. The enzyme catalyses (sulfur carrier)-H + L-cysteine = (sulfur carrier)-SH + L-alanine. The protein operates within cofactor biosynthesis; iron-sulfur cluster biosynthesis. In terms of biological role, master enzyme that delivers sulfur to a number of partners involved in Fe-S cluster assembly, tRNA modification or cofactor biosynthesis. Catalyzes the removal of elemental sulfur atoms from cysteine to produce alanine. Functions as a sulfur delivery protein for Fe-S cluster synthesis onto IscU, an Fe-S scaffold assembly protein, as well as other S acceptor proteins. The protein is Cysteine desulfurase IscS of Pseudomonas aeruginosa (strain UCBPP-PA14).